A 1375-amino-acid chain; its full sequence is ARF guanine-nucleotide exchange factor GNL2 (1375 aa).

An SEC7 domain is found at 486 to 676 (HIRVRKAQKR…SELFQSIATN (191 aa)). Glu590 is a catalytic residue.

Homodimer. Preferentially expressed in mature pollen grains and growing pollen tubes.

The protein resides in the cytoplasm. The protein localises to the cytosol. It localises to the membrane. Functionally, activates the ARF proteins by exchanging bound GDP for free GTP. Plays a role in vesicular protein sorting. Essential for pollen germination. This Arabidopsis thaliana (Mouse-ear cress) protein is ARF guanine-nucleotide exchange factor GNL2 (GNL2).